Reading from the N-terminus, the 309-residue chain is Protein FdhE homolog (309 aa).

Belongs to the FdhE family.

Its subcellular location is the cytoplasm. Necessary for formate dehydrogenase activity. This chain is Protein FdhE homolog, found in Pasteurella multocida (strain Pm70).